Consider the following 380-residue polypeptide: Erythronate-4-phosphate dehydrogenase (380 aa).

Serine 45 and threonine 66 together coordinate substrate. Residues aspartate 146, threonine 174, 205-207 (ASR), and aspartate 231 contribute to the NAD(+) site. Residue arginine 207 is part of the active site. The active site involves glutamate 236. The Proton donor role is filled by histidine 253. Residue glycine 256 participates in NAD(+) binding. Tyrosine 257 lines the substrate pocket.

The protein belongs to the D-isomer specific 2-hydroxyacid dehydrogenase family. PdxB subfamily. As to quaternary structure, homodimer.

It is found in the cytoplasm. The catalysed reaction is 4-phospho-D-erythronate + NAD(+) = (R)-3-hydroxy-2-oxo-4-phosphooxybutanoate + NADH + H(+). The protein operates within cofactor biosynthesis; pyridoxine 5'-phosphate biosynthesis; pyridoxine 5'-phosphate from D-erythrose 4-phosphate: step 2/5. In terms of biological role, catalyzes the oxidation of erythronate-4-phosphate to 3-hydroxy-2-oxo-4-phosphonooxybutanoate. This Pseudomonas putida (strain ATCC 700007 / DSM 6899 / JCM 31910 / BCRC 17059 / LMG 24140 / F1) protein is Erythronate-4-phosphate dehydrogenase.